The chain runs to 306 residues: Recombination-associated protein RdgC (306 aa).

The protein belongs to the RdgC family.

It is found in the cytoplasm. It localises to the nucleoid. In terms of biological role, may be involved in recombination. The protein is Recombination-associated protein RdgC of Pseudomonas syringae pv. tomato (strain ATCC BAA-871 / DC3000).